Reading from the N-terminus, the 454-residue chain is Macrophage scavenger receptor types I and II (454 aa).

The interval 1-22 (MAQWDSFTDQQEDTDSCSESVK) is disordered. Residues 1-50 (MAQWDSFTDQQEDTDSCSESVKFDARSNTALLPPNPKNGPPLQEKLKSFK) are Cytoplasmic-facing. Ser-27 is modified (phosphoserine). Residues 51–73 (AALIALYLLVFAVLIPIIAIMAA) traverse the membrane as a helical; Signal-anchor for type II membrane protein segment. The interval 74 to 109 (QLLKWEMKNCTVGSINANSVSSSLLGRGNDSEHEVR) is spacer. At 74–454 (QLLKWEMKNC…GEDAGVTCTL (381 aa)) the chain is on the extracellular side. Residues Asn-82, Asn-102, Asn-143, Asn-184, Asn-221, Asn-249, and Asn-267 are each glycosylated (N-linked (GlcNAc...) asparagine). Residues 199-256 (VKFQENTLKGQEEISKLKERVHNASAEIMSMKEEQVHLEQEIKREVKVLNNITNDLRL) adopt a coiled-coil conformation. Residues 267 to 347 (NITLIQGPPG…KGEKGSGSIL (81 aa)) are disordered. Positions 273 to 344 (GPPGPPGEKG…KGQKGEKGSG (72 aa)) constitute a Collagen-like domain. An SRCR domain is found at 353–453 (VRLVGGRGPH…HGEDAGVTCT (101 aa)). 3 disulfides stabilise this stretch: Cys-378/Cys-442, Cys-391/Cys-452, and Cys-422/Cys-432.

In terms of assembly, homotrimer. Interacts with MYO18A.

It is found in the membrane. Membrane glycoproteins implicated in the pathologic deposition of cholesterol in arterial walls during atherogenesis. Two types of receptor subunits exist. These receptors mediate the endocytosis of a diverse group of macromolecules, including modified low density lipoproteins (LDL). The chain is Macrophage scavenger receptor types I and II (MSR1) from Oryctolagus cuniculus (Rabbit).